We begin with the raw amino-acid sequence, 311 residues long: Bifunctional protein FolD (311 aa).

Residue 174 to 176 (GKG) coordinates NADP(+).

The protein belongs to the tetrahydrofolate dehydrogenase/cyclohydrolase family. As to quaternary structure, homodimer.

It catalyses the reaction (6R)-5,10-methylene-5,6,7,8-tetrahydrofolate + NADP(+) = (6R)-5,10-methenyltetrahydrofolate + NADPH. The catalysed reaction is (6R)-5,10-methenyltetrahydrofolate + H2O = (6R)-10-formyltetrahydrofolate + H(+). It participates in one-carbon metabolism; tetrahydrofolate interconversion. Catalyzes the oxidation of 5,10-methylenetetrahydrofolate to 5,10-methenyltetrahydrofolate and then the hydrolysis of 5,10-methenyltetrahydrofolate to 10-formyltetrahydrofolate. This chain is Bifunctional protein FolD, found in Pyrobaculum aerophilum (strain ATCC 51768 / DSM 7523 / JCM 9630 / CIP 104966 / NBRC 100827 / IM2).